Reading from the N-terminus, the 440-residue chain is MQAYFDQLDRVRYEGPQSTNPLAFRHYNPDELVLGKRMEDHLRFAACYWHTFCWNGADMFGVGAFNRPWQQPGEALELAKRKADVAFEFFHKLNVPFYCFHDVDVSPEGASLKEYKNNFAQMVDVLAAKQEQSGVKLLWGTANCFTNPRYGAGAATNPDPEVFSWAATQVVTAMNATHKLGGENYVLWGGREGYETLLNTDLRQEREQIGRFMQMVVEHKHKMGFQGTLLIEPKPQEPTKHQYDYDVATVYGFLKQFGLEKEIKVNIEANHATLAGHSFHHEIATAIALGIFGSVDANRGDAQLGWDTDQFPISVEENALVMYEILKAGGFTTGGLNFDAKVRRQSTDKYDLFYGHIGAMDTMALSLKIAARMVEDGELDKRVAKRYAGWNSELGQQILKGQLSLGELAQYAEQHNLAPVHQSGHQELLENLVNRYLFDK.

Catalysis depends on residues H101 and D104. 7 residues coordinate Mg(2+): E232, E268, H271, D296, D307, D309, and D339.

Belongs to the xylose isomerase family. Homotetramer. The cofactor is Mg(2+).

It localises to the cytoplasm. It carries out the reaction alpha-D-xylose = alpha-D-xylulofuranose. The sequence is that of Xylose isomerase from Salmonella dublin (strain CT_02021853).